We begin with the raw amino-acid sequence, 637 residues long: 1,4-alpha-glucan branching enzyme GlgB (637 aa).

D307 acts as the Nucleophile in catalysis. E361 (proton donor) is an active-site residue.

This sequence belongs to the glycosyl hydrolase 13 family. GlgB subfamily. As to quaternary structure, monomer.

It carries out the reaction Transfers a segment of a (1-&gt;4)-alpha-D-glucan chain to a primary hydroxy group in a similar glucan chain.. It participates in glycan biosynthesis; glycogen biosynthesis. Its function is as follows. Catalyzes the formation of the alpha-1,6-glucosidic linkages in glycogen by scission of a 1,4-alpha-linked oligosaccharide from growing alpha-1,4-glucan chains and the subsequent attachment of the oligosaccharide to the alpha-1,6 position. The chain is 1,4-alpha-glucan branching enzyme GlgB from Oceanobacillus iheyensis (strain DSM 14371 / CIP 107618 / JCM 11309 / KCTC 3954 / HTE831).